The following is a 111-amino-acid chain: MMGMNPRQMKKLMKQLGIKMEELEGVEEVVLRMKGKEIILKEPAVTVMVVQGEKTYQIIPGSEEVREVLEISEDDIKLVMEQAGVDYDTAKKALEEAKGDLAEAILKLTEG.

One can recognise an NAC-A/B domain in the interval 3–72 (GMNPRQMKKL…EEVREVLEIS (70 aa)).

The protein belongs to the NAC-alpha family. In terms of assembly, homodimer. Interacts with the ribosome. Binds ribosomal RNA.

Functionally, contacts the emerging nascent chain on the ribosome. This is Nascent polypeptide-associated complex protein from Thermococcus kodakarensis (strain ATCC BAA-918 / JCM 12380 / KOD1) (Pyrococcus kodakaraensis (strain KOD1)).